We begin with the raw amino-acid sequence, 629 residues long: tRNA uridine 5-carboxymethylaminomethyl modification enzyme MnmG (629 aa).

13-18 (GGGHAG) contacts FAD. 273 to 287 (GPRYCPSIEDKIHRF) contributes to the NAD(+) binding site.

This sequence belongs to the MnmG family. Homodimer. Heterotetramer of two MnmE and two MnmG subunits. FAD is required as a cofactor.

It is found in the cytoplasm. In terms of biological role, NAD-binding protein involved in the addition of a carboxymethylaminomethyl (cmnm) group at the wobble position (U34) of certain tRNAs, forming tRNA-cmnm(5)s(2)U34. The chain is tRNA uridine 5-carboxymethylaminomethyl modification enzyme MnmG from Shewanella baltica (strain OS185).